Here is a 285-residue protein sequence, read N- to C-terminus: 2-dehydro-3-deoxyphosphooctonate aldolase (285 aa).

This sequence belongs to the KdsA family.

The protein resides in the cytoplasm. The catalysed reaction is D-arabinose 5-phosphate + phosphoenolpyruvate + H2O = 3-deoxy-alpha-D-manno-2-octulosonate-8-phosphate + phosphate. It participates in carbohydrate biosynthesis; 3-deoxy-D-manno-octulosonate biosynthesis; 3-deoxy-D-manno-octulosonate from D-ribulose 5-phosphate: step 2/3. The protein operates within bacterial outer membrane biogenesis; lipopolysaccharide biosynthesis. This Acinetobacter baumannii (strain SDF) protein is 2-dehydro-3-deoxyphosphooctonate aldolase.